Here is a 508-residue protein sequence, read N- to C-terminus: MVAEAGSMPAASSVKKPFGLRSKMGKWCRHCFPWCRGSGKSNVGTSGDHDDSAMKTLRSKMGKWCRHCFPWCRGSGKSNVGTSGDHDDSAMKTLRSKMGKWCCHCFPCCRGSGKSKVGPWGDYDDSAFMEPRYHVRREDLDKLHRAAWWGKVPRKDLIVMLKDTDMNKKDKQKRTALHLASANGNSEVVKLLLDRRCQLNILDNKKRTALTKAVQCQEDECALMLLEHGTDPNIPDEYGNTALHYAIYNEDKLMAKALLLYGADIESKNKHGLTPLLLGVHEQKQQVVKFLIKKKANLNALDRYGRTVLILAVCCGSASIVSLLLEQNIDVSSQDLSGQTAREYAVSSRHNVICQLLSDYKEKQILKVSSENSNPEQDLKLTSEEESQRLKGSENSQPEEMSQEPEINKGGDRKVEEEMKKHGSTHMGFPENLPNGATADNGDDGLIPPRKSRTPESQQFPDTENEQYHSDEQNDTQKQLSEEQNTGILQDEILIHEEKQIEVAENEF.

ANK repeat units lie at residues 172 to 201 (QKRTALHLASANGNSEVVKLLLDRRCQLNI), 205 to 234 (KKRTALTKAVQCQEDECALMLLEHGTDPNI), 238 to 267 (YGNTALHYAIYNEDKLMAKALLLYGADIES), 271 to 300 (HGLTPLLLGVHEQKQQVVKFLIKKKANLNA), and 304 to 333 (YGRTVLILAVCCGSASIVSLLLEQNIDVSS). The disordered stretch occupies residues 369-487 (SSENSNPEQD…KQLSEEQNTG (119 aa)). 2 stretches are compositionally biased toward basic and acidic residues: residues 377-392 (QDLKLTSEEESQRLKG) and 406-421 (EINKGGDRKVEEEMKK). Over residues 476–487 (TQKQLSEEQNTG) the composition is skewed to polar residues.

Belongs to the POTE family.

This is Putative POTE ankyrin domain family member M (POTEM) from Homo sapiens (Human).